Reading from the N-terminus, the 652-residue chain is Threonine--tRNA ligase (652 aa).

The 61-residue stretch at Met-1–Thr-61 folds into the TGS domain. The catalytic stretch occupies residues Asp-243 to Pro-548. Zn(2+) is bound by residues Cys-348, His-399, and His-525.

Belongs to the class-II aminoacyl-tRNA synthetase family. As to quaternary structure, homodimer. Zn(2+) serves as cofactor.

The protein resides in the cytoplasm. The enzyme catalyses tRNA(Thr) + L-threonine + ATP = L-threonyl-tRNA(Thr) + AMP + diphosphate + H(+). Its function is as follows. Catalyzes the attachment of threonine to tRNA(Thr) in a two-step reaction: L-threonine is first activated by ATP to form Thr-AMP and then transferred to the acceptor end of tRNA(Thr). Also edits incorrectly charged L-seryl-tRNA(Thr). In Parvibaculum lavamentivorans (strain DS-1 / DSM 13023 / NCIMB 13966), this protein is Threonine--tRNA ligase.